We begin with the raw amino-acid sequence, 1456 residues long: Macrophage mannose receptor 1 (1456 aa).

An N-terminal signal peptide occupies residues 1–18; sequence MRLPLLLVFASVIPGAVL. Residues 19-1389 lie on the Extracellular side of the membrane; it reads LLDTRQFLIY…DPSKPSSNVA (1371 aa). The Ricin B-type lectin domain occupies 22-142; the sequence is TRQFLIYNED…SGLWSRWKIY (121 aa). 2 disulfides stabilise this stretch: Cys-35/Cys-49 and Cys-74/Cys-91. Residue Asn-104 is glycosylated (N-linked (GlcNAc...) asparagine). In terms of domain architecture, Fibronectin type-II spans 163 to 211; the sequence is ANGATCAFPFKFENKWYADCTSAGRSDGWLWCGTTTDYDTDKLFGYCPL. 4 disulfide bridges follow: Cys-168-Cys-194, Cys-182-Cys-209, Cys-247-Cys-340, and Cys-316-Cys-332. A C-type lectin 1 domain is found at 225 to 341; it reads LTSVSYQINS…CVQKLGYICK (117 aa). A glycan (N-linked (GlcNAc...) asparagine) is linked at Asn-344. C-type lectin domains follow at residues 369-487, 511-626, 655-778, and 807-923; these read YAGH…YICK, HHFY…FVCK, RTSL…WICQ, and YKDY…FICQ. Cystine bridges form between Cys-391-Cys-486 and Cys-463-Cys-478. Asn-529 carries an N-linked (GlcNAc...) asparagine glycan. 7 disulfide bridges follow: Cys-532-Cys-625, Cys-600-Cys-617, Cys-646-Cys-659, Cys-680-Cys-777, Cys-753-Cys-769, Cys-828-Cys-922, and Cys-899-Cys-914. N-linked (GlcNAc...) asparagine glycosylation is found at Asn-926 and Asn-930. C-type lectin domains lie at 952–1080, 1102–1213, and 1241–1356; these read YSNK…YICQ, YGKS…FLCK, and FHGH…YICK. 6 disulfides stabilise this stretch: Cys-977–Cys-1079, Cys-1052–Cys-1071, Cys-1123–Cys-1212, Cys-1190–Cys-1204, Cys-1263–Cys-1355, and Cys-1332–Cys-1347. Asn-1160 is a glycosylation site (N-linked (GlcNAc...) asparagine). The N-linked (GlcNAc...) asparagine glycan is linked to Asn-1205. A helical membrane pass occupies residues 1390-1410; sequence GVVIIVILLILTGAGLAAYFF. Residues 1411 to 1456 are Cytoplasmic-facing; it reads YKKRRVHLPQEGAFENTLYFNSQSSPGTSDMKDLVGNIEQNEHSVI.

(Microbial infection) Interacts with Dengue virus. In terms of assembly, (Microbial infection) May act as a receptor for hepatitis B virus, enabling uptake of the virus in hepatic dendritic cells.

It localises to the endosome membrane. The protein localises to the cell membrane. Mediates the endocytosis of glycoproteins by macrophages. Binds both sulfated and non-sulfated polysaccharide chains. Functionally, (Microbial infection) Acts as a phagocytic receptor for bacteria, fungi and other pathogens. In terms of biological role, (Microbial infection) Acts as a receptor for Dengue virus envelope protein E. Its function is as follows. (Microbial infection) Interacts with Hepatitis B virus envelope protein. The chain is Macrophage mannose receptor 1 (MRC1) from Homo sapiens (Human).